Here is a 1105-residue protein sequence, read N- to C-terminus: Probable diguanylate cyclase DgcE (1105 aa).

10 consecutive transmembrane segments (helical) span residues 9–29 (LIAL…SFIF), 38–58 (QFGT…VAFY), 64–84 (MWPG…ILLF), 88–108 (SLNM…AVLL), 127–147 (LALG…VLLT), 156–176 (FLIW…LGLL), 190–207 (LLFE…LSWL), 211–228 (YLPW…WSAV), 236–256 (FLIF…DPSL), and 270–290 (WLPF…MYAF). The region spanning 300 to 370 (SETHFRNAME…QQVEKLISGE (71 aa)) is the PAS 1 domain. PAC domains are found at residues 374–426 (YSME…VNQQ) and 501–552 (FKLE…ALFQ). The region spanning 553 to 623 (EKERLHITLD…LMENIYSADT (71 aa)) is the PAS 2 domain. Positions 626 to 680 (SAIEQDVVLHCRSGGSYDVHYSITPLSTLDGSNIGSVLVIQDVTESRKMLRQLSY) constitute a PAC 3 domain. Residues 712 to 845 (QRHALVFIDL…GRGRVTVYEP (134 aa)) enclose the GGDEF domain. D720 is a Mg(2+) binding site. Substrate contacts are provided by N728, H733, and D737. Mg(2+) is bound at residue D763. D763 acts as the Proton acceptor in catalysis. Residue R783 participates in substrate binding. The region spanning 855 to 1104 (AAMSLDEQWR…LLVNSSYFAI (250 aa)) is the EAL domain.

In terms of assembly, homodimer. Mg(2+) serves as cofactor.

The protein localises to the cell inner membrane. It carries out the reaction 2 GTP = 3',3'-c-di-GMP + 2 diphosphate. Its pathway is purine metabolism; 3',5'-cyclic di-GMP biosynthesis. Functionally, catalyzes the synthesis of cyclic-di-GMP (c-di-GMP) via the condensation of 2 GTP molecules. Involved in the control of the switch from cell motility to adhesion via regulation of cellular levels of c-di-GMP. Part of a signaling cascade that regulates curli biosynthesis. The cascade is composed of two c-di-GMP control modules, in which c-di-GMP controlled by the DgcE/PdeH pair (module I) regulates the activity of the DgcM/PdeR pair (module II), which in turn regulates activity of the transcription factor MlrA and expression of the master biofilm regulator csgD. The protein is Probable diguanylate cyclase DgcE of Escherichia coli (strain K12).